The chain runs to 83 residues: Omega-agatoxin-Aa4b (83 aa).

A signal peptide spans 1 to 20; it reads MKLCMTLLITAIAVVTFVVA. The propeptide occupies 21–35; the sequence is TQEESAEFNEVEESR. Intrachain disulfides connect cysteine 39-cysteine 55, cysteine 47-cysteine 60, cysteine 54-cysteine 71, and cysteine 62-cysteine 69. At serine 81 the chain carries D-serine (Ser).

It belongs to the neurotoxin 02 (plectoxin) family. 03 (omega-agtx) subfamily. The toxin with D-Ser (named omega-aga IVC) is 80-90 fold more potent than that with L-Ser (omega-aga IVB) against Cav2.1/CACNA1A (P-type) channels in rat cerebellar Purkinje neurons and is more resistant to proteases. The epimerization is done by the venom peptide isomerase heterodimer. As to expression, expressed by the venom gland.

It localises to the secreted. Its function is as follows. Antagonist of voltage-gated Cav2.1/CACNA1A (P-type) calcium channels. Paralyzes insect by blocking neuromuscular transmission. This is Omega-agatoxin-Aa4b from Agelenopsis aperta (North American funnel-web spider).